A 74-amino-acid chain; its full sequence is Large ribosomal subunit protein bL31 (74 aa).

It belongs to the bacterial ribosomal protein bL31 family. Type A subfamily. In terms of assembly, part of the 50S ribosomal subunit.

Its function is as follows. Binds the 23S rRNA. The protein is Large ribosomal subunit protein bL31 of Afipia carboxidovorans (strain ATCC 49405 / DSM 1227 / KCTC 32145 / OM5) (Oligotropha carboxidovorans).